A 185-amino-acid polypeptide reads, in one-letter code: Peptidyl-tRNA hydrolase (185 aa).

Y14 is a binding site for tRNA. The Proton acceptor role is filled by H19. TRNA contacts are provided by Y65, N67, and N113.

It belongs to the PTH family. In terms of assembly, monomer.

Its subcellular location is the cytoplasm. It carries out the reaction an N-acyl-L-alpha-aminoacyl-tRNA + H2O = an N-acyl-L-amino acid + a tRNA + H(+). Hydrolyzes ribosome-free peptidyl-tRNAs (with 1 or more amino acids incorporated), which drop off the ribosome during protein synthesis, or as a result of ribosome stalling. Its function is as follows. Catalyzes the release of premature peptidyl moieties from peptidyl-tRNA molecules trapped in stalled 50S ribosomal subunits, and thus maintains levels of free tRNAs and 50S ribosomes. The chain is Peptidyl-tRNA hydrolase from Rickettsia typhi (strain ATCC VR-144 / Wilmington).